Reading from the N-terminus, the 295-residue chain is Transcriptional regulator SirC (295 aa).

The region spanning 195–292 is the HTH araC/xylS-type domain; the sequence is EKVYNIIISD…KITPLSFMRT (98 aa). 2 consecutive DNA-binding regions (H-T-H motif) follow at residues 212 to 233 and 259 to 282; these read AEVA…AAEE and ISQV…KRHF.

Positive regulator of the expression of the invasion-associated type III secretion system encoded within SPI-1 (pathogenicity island 1). The protein is Transcriptional regulator SirC (sirC) of Salmonella typhimurium (strain SL1344).